We begin with the raw amino-acid sequence, 271 residues long: 5-amino-6-(5-phospho-D-ribitylamino)uracil phosphatase YbjI (271 aa).

Residue Asp9 is the Nucleophile of the active site. Asp9 contacts Mg(2+). Residue Met10 participates in phosphate binding. Asp11 provides a ligand contact to Mg(2+). Residues 44–45 (SG) and Lys192 contribute to the phosphate site. Residue Asp215 coordinates Mg(2+). A phosphate-binding site is contributed by Asn218.

It belongs to the HAD-like hydrolase superfamily. Cof family. It depends on Mg(2+) as a cofactor. Mn(2+) serves as cofactor. Co(2+) is required as a cofactor. Requires Zn(2+) as cofactor.

The enzyme catalyses 5-amino-6-(5-phospho-D-ribitylamino)uracil + H2O = 5-amino-6-(D-ribitylamino)uracil + phosphate. It functions in the pathway cofactor biosynthesis; riboflavin biosynthesis; 5-amino-6-(D-ribitylamino)uracil from GTP: step 4/4. Functionally, catalyzes the dephosphorylation of 5-amino-6-(5-phospho-D-ribitylamino)uracil, and thus could be involved in the riboflavin biosynthesis pathway. Is also able to dephosphorylate flavin mononucleotide (FMN), erythrose 4-phosphate and other phosphoric acid esters. This chain is 5-amino-6-(5-phospho-D-ribitylamino)uracil phosphatase YbjI (ybjI), found in Escherichia coli (strain K12).